Consider the following 311-residue polypeptide: Probable manganese-dependent inorganic pyrophosphatase (311 aa).

Positions 9, 13, 15, 77, 99, and 151 each coordinate Mn(2+).

This sequence belongs to the PPase class C family. It depends on Mn(2+) as a cofactor.

It localises to the cytoplasm. The catalysed reaction is diphosphate + H2O = 2 phosphate + H(+). The chain is Probable manganese-dependent inorganic pyrophosphatase from Streptococcus pyogenes serotype M1.